A 407-amino-acid polypeptide reads, in one-letter code: Odorant receptor 67a (407 aa).

At 1–40 the chain is on the cytoplasmic side; it reads MDNVAEMPEEKYVEVDDFLRLAVKFYNTLGIDPYETGRKR. The chain crosses the membrane as a helical span at residues 41–61; that stretch reads TIWFQIYFALNMFNMVFSFYA. Residues 62-79 are Extracellular-facing; the sequence is EVATLVDRLRDNENFLES. A helical transmembrane segment spans residues 80–100; sequence CILLSYVSFVVMGLSKIGAVM. Topologically, residues 101–144 are cytoplasmic; it reads KKKPKMTALVRQLETCFPSPSAKVQEEYAVKSWLKRCHIYTKGF. Residues 145–165 form a helical membrane-spanning segment; that stretch reads GGLFMIMYFAHALIPLFIYFI. The Extracellular portion of the chain corresponds to 166 to 208; the sequence is QRVLLHYPDAKQIMPFYQLEPWEFRDSWLFYPSYFHQSSAGYT. A helical membrane pass occupies residues 209–229; that stretch reads ATCGSIAGDLMIFAVVLQVIM. Residues 230 to 278 are Cytoplasmic-facing; that stretch reads HYERLAKVLREFKIQAHNAPNGAKEDIRKLQSLVANHIDILRLTDLMNE. The chain crosses the membrane as a helical span at residues 279–300; the sequence is VFGIPLLLNFIASALLVCLVGV. The Extracellular segment spans residues 301 to 314; it reads QLTIALSPEYFCKQ. Residues 315–331 traverse the membrane as a helical segment; the sequence is MLFLISVLLEVYLLCSF. Residues 332 to 378 lie on the Cytoplasmic side of the membrane; sequence SQRLIDASENVGHAAYDMDWLGSDKRFKKILIFISMRSQKPVCLKAT. Residues 379 to 401 form a helical membrane-spanning segment; it reads VVLDLSMPTMSIFLGMSYKFFCA. The Extracellular portion of the chain corresponds to 402–407; the sequence is VRTMYQ.

It belongs to the insect chemoreceptor superfamily. Heteromeric odorant receptor channel (TC 1.A.69) family. Or49a subfamily. Interacts with Orco. Complexes exist early in the endomembrane system in olfactory sensory neurons (OSNs), coupling these complexes to the conserved ciliary trafficking pathway. Expressed in olfactory sensory neurons in the antenna.

The protein resides in the cell membrane. Its function is as follows. Odorant receptor which mediates acceptance or avoidance behavior, depending on its substrates. The odorant receptor repertoire encodes a large collection of odor stimuli that vary widely in identity, intensity, and duration. Forms a complex with Orco to form odorant-sensing units, providing sensitive and prolonged odorant signaling and calcium permeability. Involved in the behavioral responses to benzaldehyde and acetophenone. In Drosophila melanogaster (Fruit fly), this protein is Odorant receptor 67a (Or67a).